Consider the following 293-residue polypeptide: 4-hydroxy-tetrahydrodipicolinate synthase (293 aa).

A pyruvate-binding site is contributed by Thr45. Tyr133 functions as the Proton donor/acceptor in the catalytic mechanism. Catalysis depends on Lys161, which acts as the Schiff-base intermediate with substrate. Val203 is a pyruvate binding site.

The protein belongs to the DapA family. As to quaternary structure, homotetramer; dimer of dimers.

The protein resides in the cytoplasm. The catalysed reaction is L-aspartate 4-semialdehyde + pyruvate = (2S,4S)-4-hydroxy-2,3,4,5-tetrahydrodipicolinate + H2O + H(+). Its pathway is amino-acid biosynthesis; L-lysine biosynthesis via DAP pathway; (S)-tetrahydrodipicolinate from L-aspartate: step 3/4. Its function is as follows. Catalyzes the condensation of (S)-aspartate-beta-semialdehyde [(S)-ASA] and pyruvate to 4-hydroxy-tetrahydrodipicolinate (HTPA). The protein is 4-hydroxy-tetrahydrodipicolinate synthase of Exiguobacterium sp. (strain ATCC BAA-1283 / AT1b).